We begin with the raw amino-acid sequence, 662 residues long: A-kinase anchor protein 10, mitochondrial (662 aa).

The transit peptide at 1-28 (MRGAGPSPRQSPRTLRPDPGPAMSFFRR) directs the protein to the mitochondrion. The disordered stretch occupies residues 1 to 55 (MRGAGPSPRQSPRTLRPDPGPAMSFFRRKVKGKEQEKTSDVKSIKASISVHSPQK). Over residues 32–43 (GKEQEKTSDVKS) the composition is skewed to basic and acidic residues. Residues Ser52 and Ser189 each carry the phosphoserine modification. RGS domains follow at residues 125-369 (TLEQ…CKYQ) and 379-505 (YLAD…YKYL). Polar residues predominate over residues 261–280 (SMETQESSSTLTVASRNSPA). A disordered region spans residues 261 to 282 (SMETQESSSTLTVASRNSPASP). Ser281 bears the Phosphoserine mark. Residues 524-548 (LTAPGSVGPPDESHPGSSDSSASQS) are disordered. The PKA-RII subunit binding stretch occupies residues 634–647 (LAWKIAKMIVSDIM).

The protein resides in the mitochondrion. It localises to the membrane. Its subcellular location is the cytoplasm. Its function is as follows. Differentially targeted protein that binds to type I and II regulatory subunits of protein kinase A and anchors them to the mitochondria or the plasma membrane. Although the physiological relevance between PKA and AKAPS with mitochondria is not fully understood, one idea is that BAD, a proapoptotic member, is phosphorylated and inactivated by mitochondria-anchored PKA. It cannot be excluded too that it may facilitate PKA as well as G protein signal transduction, by acting as an adapter for assembling multiprotein complexes. With its RGS domain, it could lead to the interaction to G-alpha proteins, providing a link between the signaling machinery and the downstream kinase. The polypeptide is A-kinase anchor protein 10, mitochondrial (AKAP10) (Homo sapiens (Human)).